Reading from the N-terminus, the 452-residue chain is Trigger factor (452 aa).

The 86-residue stretch at Gly171 to Thr256 folds into the PPIase FKBP-type domain.

This sequence belongs to the FKBP-type PPIase family. Tig subfamily.

It localises to the cytoplasm. It carries out the reaction [protein]-peptidylproline (omega=180) = [protein]-peptidylproline (omega=0). In terms of biological role, involved in protein export. Acts as a chaperone by maintaining the newly synthesized protein in an open conformation. Functions as a peptidyl-prolyl cis-trans isomerase. The sequence is that of Trigger factor from Rhodopseudomonas palustris (strain HaA2).